The following is a 314-amino-acid chain: Serine/threonine-protein phosphatase PP2A-5 catalytic subunit (314 aa).

Mn(2+) is bound by residues Asp-62, His-64, Asp-90, and Asn-122. His-123 acts as the Proton donor in catalysis. Mn(2+)-binding residues include His-172 and His-246.

It belongs to the PPP phosphatase family. PP-2A subfamily. It depends on Mn(2+) as a cofactor.

It is found in the cytoplasm. The enzyme catalyses O-phospho-L-seryl-[protein] + H2O = L-seryl-[protein] + phosphate. It catalyses the reaction O-phospho-L-threonyl-[protein] + H2O = L-threonyl-[protein] + phosphate. This Nicotiana tabacum (Common tobacco) protein is Serine/threonine-protein phosphatase PP2A-5 catalytic subunit (NPP5).